The sequence spans 489 residues: Cytochrome P450-DIT2 (489 aa).

Cys-435 is a binding site for heme.

The protein belongs to the cytochrome P450 family. The cofactor is heme.

Its function is as follows. Involved in spore wall maturation. Thought to catalyze the oxidation of tyrosine residues in the formation of LL-dityrosine a precursor of the spore wall. This Saccharomyces cerevisiae (strain ATCC 204508 / S288c) (Baker's yeast) protein is Cytochrome P450-DIT2 (DIT2).